The sequence spans 355 residues: 3-isopropylmalate dehydrogenase (355 aa).

Substrate is bound by residues R90, R100, R128, and D222. Mg(2+) is bound by residues D222, D246, and D250. 280-292 (GSAPDIAGKGVAN) lines the NAD(+) pocket.

This sequence belongs to the isocitrate and isopropylmalate dehydrogenases family. LeuB type 1 subfamily. As to quaternary structure, homodimer. Mg(2+) is required as a cofactor. The cofactor is Mn(2+).

Its subcellular location is the cytoplasm. The catalysed reaction is (2R,3S)-3-isopropylmalate + NAD(+) = 4-methyl-2-oxopentanoate + CO2 + NADH. The protein operates within amino-acid biosynthesis; L-leucine biosynthesis; L-leucine from 3-methyl-2-oxobutanoate: step 3/4. Catalyzes the oxidation of 3-carboxy-2-hydroxy-4-methylpentanoate (3-isopropylmalate) to 3-carboxy-4-methyl-2-oxopentanoate. The product decarboxylates to 4-methyl-2 oxopentanoate. In Cupriavidus metallidurans (strain ATCC 43123 / DSM 2839 / NBRC 102507 / CH34) (Ralstonia metallidurans), this protein is 3-isopropylmalate dehydrogenase.